Consider the following 253-residue polypeptide: MSGHSKWATTKHKKAVIDARRAKAFAKYIKNIEVAARAGGPDVAGNPALDLAVSKAKKASVPNDNIDRAVKRGAGLTGEVIDYAEIMYEVRGPQGSALLVECLTDNKNRAAADVRAAVTRNGGTMADSGSVSFLFERKGLVRLPAEGNTEDGLLEAVLEGGADAEEVVLSGDSFEILSDPSDLQSVAKALDEAGVEYESDELEFVPTMKVDLDASGARTFLRLTDALEDLDDVQNVFSNVDIAPEVLAELDED.

It belongs to the TACO1 family.

The protein resides in the cytoplasm. The sequence is that of Probable transcriptional regulatory protein Mlut_12910 from Micrococcus luteus (strain ATCC 4698 / DSM 20030 / JCM 1464 / CCM 169 / CCUG 5858 / IAM 1056 / NBRC 3333 / NCIMB 9278 / NCTC 2665 / VKM Ac-2230) (Micrococcus lysodeikticus).